We begin with the raw amino-acid sequence, 1517 residues long: DNA-directed RNA polymerase subunit beta' (1517 aa).

Zn(2+) contacts are provided by Cys-71, Cys-73, Cys-86, and Cys-89. Positions 482, 484, and 486 each coordinate Mg(2+). Zn(2+)-binding residues include Cys-812, Cys-886, Cys-893, and Cys-896.

The protein belongs to the RNA polymerase beta' chain family. As to quaternary structure, the RNAP catalytic core consists of 2 alpha, 1 beta, 1 beta' and 1 omega subunit. When a sigma factor is associated with the core the holoenzyme is formed, which can initiate transcription. It depends on Mg(2+) as a cofactor. Zn(2+) is required as a cofactor.

It carries out the reaction RNA(n) + a ribonucleoside 5'-triphosphate = RNA(n+1) + diphosphate. Its function is as follows. DNA-dependent RNA polymerase catalyzes the transcription of DNA into RNA using the four ribonucleoside triphosphates as substrates. In Campylobacter lari (strain RM2100 / D67 / ATCC BAA-1060), this protein is DNA-directed RNA polymerase subunit beta'.